The primary structure comprises 610 residues: Zinc metalloproteinase-disintegrin-like 4a (610 aa).

Positions 1 to 20 (MIQVLLVTISLAVFPYQGSS) are cleaved as a signal peptide. A propeptide spanning residues 21 to 189 (VILESGNVND…KKASQSNLTP (169 aa)) is cleaved from the precursor. Residues 199–395 (KYVKLFLVAD…NMPQCILKKP (197 aa)) enclose the Peptidase M12B domain. N-linked (GlcNAc...) asparagine glycosylation is present at asparagine 218. Aspartate 286 provides a ligand contact to Ca(2+). Intrachain disulfides connect cysteine 310–cysteine 390, cysteine 350–cysteine 374, and cysteine 352–cysteine 357. Position 335 (histidine 335) interacts with Zn(2+). The active site involves glutamate 336. Zn(2+) is bound by residues histidine 339 and histidine 345. Ca(2+) contacts are provided by cysteine 390, valine 405, asparagine 408, phenylalanine 410, glutamate 412, glutamate 415, and aspartate 418. Positions 403-488 (PAVCGNYFVE…AECTDSFQRN (86 aa)) constitute a Disintegrin domain. 14 disulfide bridges follow: cysteine 406–cysteine 435, cysteine 417–cysteine 430, cysteine 419–cysteine 425, cysteine 429–cysteine 452, cysteine 443–cysteine 449, cysteine 448–cysteine 474, cysteine 461–cysteine 481, cysteine 468–cysteine 499, cysteine 492–cysteine 504, cysteine 511–cysteine 561, cysteine 526–cysteine 572, cysteine 539–cysteine 549, cysteine 556–cysteine 598, and cysteine 592–cysteine 603. Positions 467-469 (ECD) match the D/ECD-tripeptide motif.

Belongs to the venom metalloproteinase (M12B) family. P-III subfamily. Requires Zn(2+) as cofactor. Expressed by the venom gland.

It is found in the secreted. Functionally, snake venom metalloproteinase that impairs hemostasis in the envenomed animal. In Crotalus adamanteus (Eastern diamondback rattlesnake), this protein is Zinc metalloproteinase-disintegrin-like 4a.